The sequence spans 1097 residues: DNA-directed RNA polymerase subunit beta (1097 aa).

Residues 1072-1097 form a disordered region; the sequence is QDINPRRNTPSRPTYESLGTSEYEED. Positions 1077 to 1091 are enriched in polar residues; sequence RRNTPSRPTYESLGT.

This sequence belongs to the RNA polymerase beta chain family. As to quaternary structure, in cyanobacteria the RNAP catalytic core is composed of 2 alpha, 1 beta, 1 beta', 1 gamma and 1 omega subunit. When a sigma factor is associated with the core the holoenzyme is formed, which can initiate transcription.

The catalysed reaction is RNA(n) + a ribonucleoside 5'-triphosphate = RNA(n+1) + diphosphate. Its function is as follows. DNA-dependent RNA polymerase catalyzes the transcription of DNA into RNA using the four ribonucleoside triphosphates as substrates. In Prochlorococcus marinus (strain AS9601), this protein is DNA-directed RNA polymerase subunit beta.